Here is a 37-residue protein sequence, read N- to C-terminus: Large ribosomal subunit protein bL36c (37 aa).

Belongs to the bacterial ribosomal protein bL36 family.

The protein localises to the plastid. The protein resides in the chloroplast. The chain is Large ribosomal subunit protein bL36c from Adiantum capillus-veneris (Maidenhair fern).